Reading from the N-terminus, the 203-residue chain is Small ribosomal subunit protein uS4 (203 aa).

One can recognise an S4 RNA-binding domain in the interval 93–154 (RRLDNVVYRC…KSRNLDAVAD (62 aa)).

It belongs to the universal ribosomal protein uS4 family. In terms of assembly, part of the 30S ribosomal subunit. Contacts protein S5. The interaction surface between S4 and S5 is involved in control of translational fidelity.

In terms of biological role, one of the primary rRNA binding proteins, it binds directly to 16S rRNA where it nucleates assembly of the body of the 30S subunit. Functionally, with S5 and S12 plays an important role in translational accuracy. This chain is Small ribosomal subunit protein uS4, found in Chlorobaculum tepidum (strain ATCC 49652 / DSM 12025 / NBRC 103806 / TLS) (Chlorobium tepidum).